Here is a 340-residue protein sequence, read N- to C-terminus: Ephrin-B3 (340 aa).

The signal sequence occupies residues 1–27; the sequence is MGAPHFGPGGVQVGALLLLGFAGLVSG. Residues 28 to 167 enclose the Ephrin RBD domain; it reads LSLEPVYWNS…TRGMKVLLRV (140 aa). Over 28–227 the chain is Extracellular; sequence LSLEPVYWNS…GPLPPPSMPA (200 aa). Cystine bridges form between Cys-62/Cys-104 and Cys-92/Cys-156. The interval 168–227 is disordered; the sequence is GQSPRGGAVPRKPVSEMPMERDRGAAHSAEPGRDTIPGDPSSNATSRGAEGPLPPPSMPA. Positions 185 to 200 are enriched in basic and acidic residues; the sequence is PMERDRGAAHSAEPGR. Residue Asn-210 is glycosylated (N-linked (GlcNAc...) asparagine). Residues 228-248 traverse the membrane as a helical segment; that stretch reads VAGAAGGMALLLLGVAGAGGA. The Cytoplasmic segment spans residues 249 to 340; that stretch reads MCWRRRRAKP…QSPPNIYYKV (92 aa). Positions 254–300 are disordered; the sequence is RRAKPSESRHPGPGSFGRGGSLGLGGGGGMGPREAEPGELGIALRGG. Gly residues predominate over residues 267–284; that stretch reads GSFGRGGSLGLGGGGGMG. An Omega-N-methylarginine modification is found at Arg-271. Ser-274 carries the phosphoserine modification. A PDZ-binding motif is present at residues 338–340; that stretch reads YKV.

The protein belongs to the ephrin family. As to quaternary structure, interacts with GRIP1 and GRIP2. In terms of tissue distribution, expressed on lateral floor plate cells, specifically on commissural axon segments that have passed through the floor plate. Expressed in cells of the retinal ganglion cell layer during retinal axon guidance to the optic disk. Expressed in myogenic progenitor cells.

The protein resides in the membrane. In terms of biological role, cell surface transmembrane ligand for Eph receptors, a family of receptor tyrosine kinases which are crucial for migration, repulsion and adhesion during neuronal, vascular and epithelial development. Binds promiscuously Eph receptors residing on adjacent cells, leading to contact-dependent bidirectional signaling into neighboring cells. The signaling pathway downstream of the receptor is referred to as forward signaling while the signaling pathway downstream of the ephrin ligand is referred to as reverse signaling. May play a pivotal role in forebrain function. Binds to, and induce the collapse of, commissural axons/growth cones in vitro. May play a role in constraining the orientation of longitudinally projecting axons. The protein is Ephrin-B3 (Efnb3) of Mus musculus (Mouse).